The primary structure comprises 477 residues: Bifunctional protein HldE (477 aa).

The tract at residues 1–318 (MKVTLPEFER…ENAVRGRADT (318 aa)) is ribokinase. Position 179 is an N6-acetyllysine (Lys-179). 195 to 198 (NLSE) lines the ATP pocket. Asp-264 is a catalytic residue. A cytidylyltransferase region spans residues 344 to 477 (MTNGVFDILH…IKKIQQDKKG (134 aa)).

The protein in the N-terminal section; belongs to the carbohydrate kinase PfkB family. In the C-terminal section; belongs to the cytidylyltransferase family. Homodimer.

It catalyses the reaction D-glycero-beta-D-manno-heptose 7-phosphate + ATP = D-glycero-beta-D-manno-heptose 1,7-bisphosphate + ADP + H(+). The catalysed reaction is D-glycero-beta-D-manno-heptose 1-phosphate + ATP + H(+) = ADP-D-glycero-beta-D-manno-heptose + diphosphate. The protein operates within nucleotide-sugar biosynthesis; ADP-L-glycero-beta-D-manno-heptose biosynthesis; ADP-L-glycero-beta-D-manno-heptose from D-glycero-beta-D-manno-heptose 7-phosphate: step 1/4. It participates in nucleotide-sugar biosynthesis; ADP-L-glycero-beta-D-manno-heptose biosynthesis; ADP-L-glycero-beta-D-manno-heptose from D-glycero-beta-D-manno-heptose 7-phosphate: step 3/4. It functions in the pathway bacterial outer membrane biogenesis; LPS core biosynthesis. In terms of biological role, catalyzes the phosphorylation of D-glycero-D-manno-heptose 7-phosphate at the C-1 position to selectively form D-glycero-beta-D-manno-heptose-1,7-bisphosphate. Catalyzes the ADP transfer from ATP to D-glycero-beta-D-manno-heptose 1-phosphate, yielding ADP-D-glycero-beta-D-manno-heptose. This chain is Bifunctional protein HldE, found in Shigella flexneri.